The following is a 347-amino-acid chain: NADH-ubiquinone oxidoreductase chain 2 (347 aa).

The next 9 membrane-spanning stretches (helical) occupy residues 5-22, 26-45, 60-80, 150-170, 178-198, 200-220, 242-262, 274-294, and 324-344; these read ILTI…MVLI, WLTV…PILM, FLTQ…NLLL, NPNL…WGGL, ILAY…TYNP, LMML…MLFM, SLIL…GFIP, NMII…YFYM, and TLLP…PMML.

This sequence belongs to the complex I subunit 2 family. Core subunit of respiratory chain NADH dehydrogenase (Complex I) which is composed of 45 different subunits. Interacts with TMEM242.

It is found in the mitochondrion inner membrane. It catalyses the reaction a ubiquinone + NADH + 5 H(+)(in) = a ubiquinol + NAD(+) + 4 H(+)(out). Its function is as follows. Core subunit of the mitochondrial membrane respiratory chain NADH dehydrogenase (Complex I) which catalyzes electron transfer from NADH through the respiratory chain, using ubiquinone as an electron acceptor. Essential for the catalytic activity and assembly of complex I. In Martes flavigula (Yellow-throated marten), this protein is NADH-ubiquinone oxidoreductase chain 2.